Consider the following 156-residue polypeptide: Cyanate hydratase (156 aa).

Active-site residues include arginine 96, glutamate 99, and serine 122.

Belongs to the cyanase family.

The enzyme catalyses cyanate + hydrogencarbonate + 3 H(+) = NH4(+) + 2 CO2. Catalyzes the reaction of cyanate with bicarbonate to produce ammonia and carbon dioxide. The chain is Cyanate hydratase from Escherichia coli (strain ATCC 8739 / DSM 1576 / NBRC 3972 / NCIMB 8545 / WDCM 00012 / Crooks).